The chain runs to 78 residues: UPF0270 protein YPTB3725 (78 aa).

It belongs to the UPF0270 family.

The sequence is that of UPF0270 protein YPTB3725 from Yersinia pseudotuberculosis serotype I (strain IP32953).